The primary structure comprises 261 residues: Small ribosomal subunit protein uS2 (261 aa).

Positions 222-261 (GKALREQDGEANEEQPISEEEKKEVLEEAMSEEDFEGDKE) are disordered. Composition is skewed to acidic residues over residues 230–239 (GEANEEQPIS) and 248–261 (EEAMSEEDFEGDKE).

The protein belongs to the universal ribosomal protein uS2 family.

This chain is Small ribosomal subunit protein uS2, found in Campylobacter lari (strain RM2100 / D67 / ATCC BAA-1060).